A 332-amino-acid chain; its full sequence is Large ribosomal subunit protein uL29m (332 aa).

The interval 19 to 40 (RFTKPKPKPAKRENVRLPTQRT) is disordered. Positions 264–327 (TSENTESAIA…IQLQEEDAKN (64 aa)) form a coiled coil.

It belongs to the universal ribosomal protein uL29 family. In terms of assembly, component of the mitochondrial large ribosomal subunit. Mature mitochondrial ribosomes consist of a small (37S) and a large (54S) subunit. The 37S subunit contains at least 33 different proteins and 1 molecule of RNA (15S). The 54S subunit contains at least 45 different proteins and 1 molecule of RNA (21S).

The protein resides in the mitochondrion. This is Large ribosomal subunit protein uL29m (MRPL4) from Kluyveromyces lactis (strain ATCC 8585 / CBS 2359 / DSM 70799 / NBRC 1267 / NRRL Y-1140 / WM37) (Yeast).